Reading from the N-terminus, the 231-residue chain is Probable cell wall protein ARB_06477 (231 aa).

Positions 1-17 are cleaved as a signal peptide; it reads MRSVLYLLFTAVAAVAA. The interval 107 to 206 is disordered; that stretch reads TPSFMVDGAT…TGMPTSSGAP (100 aa). Positions 121–204 are enriched in low complexity; sequence TGPTTSRTSM…SSTGMPTSSG (84 aa). Ser-203 carries GPI-anchor amidated serine lipidation. The propeptide at 204-231 is removed in mature form; it reads GAPDPNGAVSLALPGGLLSIVLSLMALL.

Belongs to the SRP1/TIP1 family. In terms of processing, the GPI-anchor is attached to the protein in the endoplasmic reticulum and serves to target the protein to the cell surface. There, the glucosamine-inositol phospholipid moiety is cleaved off and the GPI-modified mannoprotein is covalently attached via its lipidless GPI glycan remnant to the 1,6-beta-glucan of the outer cell wall layer.

The protein localises to the cell membrane. The protein resides in the secreted. Its subcellular location is the cell wall. Probable component of the cell wall. In Arthroderma benhamiae (strain ATCC MYA-4681 / CBS 112371) (Trichophyton mentagrophytes), this protein is Probable cell wall protein ARB_06477.